A 365-amino-acid chain; its full sequence is Histidinol-phosphate aminotransferase (365 aa).

The segment at 1–22 (MSRPVPNPGILDIAPYTPGKSP) is disordered. Position 221 is an N6-(pyridoxal phosphate)lysine (lysine 221).

The protein belongs to the class-II pyridoxal-phosphate-dependent aminotransferase family. Histidinol-phosphate aminotransferase subfamily. Homodimer. It depends on pyridoxal 5'-phosphate as a cofactor.

It catalyses the reaction L-histidinol phosphate + 2-oxoglutarate = 3-(imidazol-4-yl)-2-oxopropyl phosphate + L-glutamate. The protein operates within amino-acid biosynthesis; L-histidine biosynthesis; L-histidine from 5-phospho-alpha-D-ribose 1-diphosphate: step 7/9. The polypeptide is Histidinol-phosphate aminotransferase (Nitrobacter winogradskyi (strain ATCC 25391 / DSM 10237 / CIP 104748 / NCIMB 11846 / Nb-255)).